The chain runs to 799 residues: Protein ADP-ribosyltransferase PARP3 (799 aa).

The span at 1-49 shows a compositional bias: basic and acidic residues; the sequence is MKVESRSHNVHHAHGEEEKVMTRKQKAESKAHEVEHSPKKAKVEDEKNG. The disordered stretch occupies residues 1-55; sequence MKVESRSHNVHHAHGEEEKVMTRKQKAESKAHEVEHSPKKAKVEDEKNGHTNGKS. Positions 39 to 188 constitute a PADR1 zinc-binding domain; the sequence is KKAKVEDEKN…QRDLGLAIKP (150 aa). The SAP domain maps to 71 to 105; it reads NEQLSLEQMKEILEANDLDSSGSDLEITRRCQDLL. Residues 108 to 152 form a zinc ribbon region; sequence GALEKCMVCNGNMEFDGRRYGCRGFYSEWSSCTFSTREPPRKDEP. Positions 113, 116, 129, and 139 each coordinate Zn(2+). Residues 140–161 are disordered; it reads TFSTREPPRKDEPIKLPDSVQN. Over residues 145-154 the composition is skewed to basic and acidic residues; that stretch reads EPPRKDEPIK. Residues 189–261 enclose the BRCT domain; sequence FTGMMISLMG…EPQPLESYDL (73 aa). One can recognise a WGR domain in the interval 309–409; that stretch reads DGKIFEKDGI…KKFQKKPLKF (101 aa). One can recognise a PARP alpha-helical domain in the interval 436–555; it reads HCKLEPMVAN…DITLASHLIG (120 aa). The 232-residue stretch at 564 to 795 folds into the PARP catalytic domain; sequence DPLSDTYKKL…VKYEEKDAVI (232 aa).

Belongs to the ARTD/PARP family.

It is found in the nucleus. The enzyme catalyses L-aspartyl-[protein] + NAD(+) = 4-O-(ADP-D-ribosyl)-L-aspartyl-[protein] + nicotinamide. The catalysed reaction is L-glutamyl-[protein] + NAD(+) = 5-O-(ADP-D-ribosyl)-L-glutamyl-[protein] + nicotinamide. Involved in the base excision repair (BER) pathway, by catalyzing the poly(ADP-ribosyl)ation of a limited number of acceptor proteins involved in chromatin architecture and in DNA metabolism. This modification follows DNA damages and appears as an obligatory step in a detection/signaling pathway leading to the reparation of DNA strand breaks. This is Protein ADP-ribosyltransferase PARP3 (PARP3) from Medicago truncatula (Barrel medic).